The following is a 246-amino-acid chain: NAD(P)H-quinone oxidoreductase subunit K, organellar chromatophore (246 aa).

The [4Fe-4S] cluster site is built by Cys58, Cys59, Cys123, and Cys154.

This sequence belongs to the complex I 20 kDa subunit family. As to quaternary structure, NDH-1 is composed of 14 different subunits. Subunits nuoB, C, D, E, F, and G constitute the peripheral sector of the complex. The cofactor is [4Fe-4S] cluster.

The protein localises to the plastid. It is found in the organellar chromatophore thylakoid membrane. The catalysed reaction is a quinone + NADH + H(+) = a quinol + NAD(+). NDH-1 shuttles electrons from NADH, via FMN and iron-sulfur (Fe-S) centers, to quinones in the respiratory chain. Couples the redox reaction to proton translocation (for every two electrons transferred, four hydrogen ions are translocated across the cytoplasmic membrane), and thus conserves the redox energy in a proton gradient. The chain is NAD(P)H-quinone oxidoreductase subunit K, organellar chromatophore from Paulinella chromatophora.